A 1270-amino-acid polypeptide reads, in one-letter code: Microtubule-associated tumor suppressor 1 (1270 aa).

Positions 1–14 (MTDDNSDDKIEDEL) are enriched in acidic residues. Disordered stretches follow at residues 1–50 (MTDD…NSAN) and 184–236 (FHTA…VTPS). Low complexity predominate over residues 38–50 (NSSASSVNWNSAN). T186 carries the phosphothreonine modification. The segment covering 197–211 (SGSTSSLSYSTWTSS) has biased composition (low complexity). Residues 212–228 (HSDKTHARETTYDRESF) are compositionally biased toward basic and acidic residues. S381, S399, and S443 each carry phosphoserine. 2 disordered regions span residues 524–560 (DAALSKVTPRPQQTSASSPSSVNSRQQTVLSRTPRSD) and 592–622 (THSKNASHRVPRTTSAVKSNQEDVDKASSSN). The segment covering 533–556 (RPQQTSASSPSSVNSRQQTVLSRT) has biased composition (polar residues). The residue at position 629 (S629) is a Phosphoserine. 3 stretches are compositionally biased toward polar residues: residues 701-710 (SKTTTTSGRN), 759-776 (VSSSGKPTSLKTAQSSWV), and 797-815 (TGSTPSIASTHSELSTYSN). Residues 701–815 (SKTTTTSGRN…THSELSTYSN (115 aa)) are disordered. Residues 940–1231 (IQHLLSEREE…RLSMENEELL (292 aa)) are a coiled coil. A phosphoserine mark is found at S1203, S1224, S1245, S1255, S1259, S1261, S1264, and S1268. Residues 1237–1270 (GDLCSPKRSPTSSAIPLQSPRNSGSFPSPSISPR) form a disordered region. Residues 1244–1270 (RSPTSSAIPLQSPRNSGSFPSPSISPR) show a composition bias toward polar residues.

This sequence belongs to the MTUS1 family. In terms of assembly, homodimer. Interacts with AGTR2. Interacts with PTPN6. Isoform 1 associates with microtubules. As to expression, ubiquitously expressed (at protein level). Highly expressed in brain. Down-regulated in ovarian carcinoma, pancreas carcinoma, colon carcinoma and head and neck squamous cell carcinoma (HNSCC). Isoform 1 is the major isoform in most peripheral tissues. Isoform 2 is abundant in most peripheral tissues. Isoform 3 is the major isoform in brain, female reproductive tissues, thyroid and heart. Within brain it is highly expressed in corpus callosum and pons. Isoform 6 is brain-specific, it is the major isoform in cerebellum and fetal brain.

It localises to the mitochondrion. It is found in the golgi apparatus. The protein resides in the cell membrane. The protein localises to the nucleus. Its subcellular location is the cytoplasm. It localises to the cytoskeleton. It is found in the microtubule organizing center. The protein resides in the centrosome. The protein localises to the spindle. Its function is as follows. Cooperates with AGTR2 to inhibit ERK2 activation and cell proliferation. May be required for AGTR2 cell surface expression. Together with PTPN6, induces UBE2V2 expression upon angiotensin-II stimulation. Isoform 1 inhibits breast cancer cell proliferation, delays the progression of mitosis by prolonging metaphase and reduces tumor growth. This is Microtubule-associated tumor suppressor 1 (MTUS1) from Homo sapiens (Human).